Reading from the N-terminus, the 553-residue chain is Cytokine-like nuclear factor N-PAC (553 aa).

In terms of domain architecture, PWWP spans 8-66 (LGDLVWGKLGRYPPWPGKIVNPPKDLKKPRGKKCFFVKFFGTEDHAWIKVEQLKPYHLH). 2 stretches are compositionally biased toward basic and acidic residues: residues 92 to 145 (KTKG…EGKK) and 162 to 182 (RAQDQSPRKRGRPPKDEKDLT). Positions 92–188 (KTKGKDQASS…KDLTIPESST (97 aa)) are disordered. Positions 168–180 (PRKRGRPPKDEKD) form a DNA-binding region, a.T hook. Residues 214–217 (DPHF) form an interaction with histone H3 region. A dehydrogenase domain region spans residues 261–553 (GSITPTDKKI…MSAVYRAYIH (293 aa)). NAD(+)-binding positions include 271–285 (GFLGLGLMGSGIVSN), T362, and K505.

This sequence belongs to the HIBADH-related family. NP60 subfamily. Homotetramere. Binds to mononucleosomes.

Its subcellular location is the nucleus. The protein resides in the chromosome. Cytokine-like nuclear factor with chromatin gene reader activity involved in chromatin modification and regulation of gene expression. Acts as a nucleosome-destabilizing factor that is recruited to genes during transcriptional activation. Recognizes and binds histone H3 without a preference for specific epigenetic markers and also binds DNA. Interacts with KDM1B and promotes its histone demethylase activity by facilitating the capture of H3 tails, they form a multifunctional enzyme complex that modifies transcribed chromatin and facilitates Pol II transcription through nucleosomes. The protein is Cytokine-like nuclear factor N-PAC (GLYR1) of Gallus gallus (Chicken).